The chain runs to 918 residues: Pre-pro-metalloprotease PrtV (918 aa).

The first 23 residues, 1–23 (MKTIKKTLLAAAIASFFSSGLYA), serve as a signal peptide directing secretion. Positions 24–105 (QTPIDLGVVN…QKGPHKARVF (82 aa)) are excised as a propeptide. Histidine 330 is a Zn(2+) binding site. The active site involves glutamate 331. Histidine 334 is a Zn(2+) binding site. Residues isoleucine 757, aspartate 782, aspartate 821, and aspartate 825 each contribute to the Ca(2+) site. PKD domains follow at residues 758-835 (APVA…TIKV) and 855-918 (VTMW…KVKL). Residues 835-918 (VDTPNALPQA…VTTITIKVKL (84 aa)) constitute a propeptide that is removed on maturation.

Belongs to the peptidase M6 family. Zn(2+) is required as a cofactor. In terms of processing, prtV is expressed as an inactive, multidomain, 102 kDa pre-pro-metalloprotease. To form a catalytically active protease, PrtV is first secreted, and then it undergoes N- and C-terminal cleavages during envelope translocation to yield a 81 kDa pro-metalloprotease. Outside the cell, the 81 kDa pro-metalloprotease undergoes an auto-cleavage. The two major products of autoproteolysis (37 kDa and 18 kDa) together form the so called 55 kDa active complex.

It is found in the secreted. Its activity is regulated as follows. Calcium plays an important structural role, providing stability to this protein in the cytoplasm. Outside the cell, the decrease of the calcium concentration triggers the autoproteolysis. PrtV activity is increased by 25 mM of Sr(2+) or Mg(2+) and to some extent by Ba(2+); however, Ba(2+) inhibits PrtV at higher concentrations. Completely inhibited by EDTA and 1,10-phenanthroline. Functionally, metalloprotease that exhibits a cytotoxic effect leading to cell death. In host tissues, it could play a role in pathogenesis by modulating the stability of the extracellular matrix components such as fibronectin and fibrinogen. Also able to cleave plasminogen. The chain is Pre-pro-metalloprotease PrtV from Vibrio cholerae serotype O1 (strain ATCC 39315 / El Tor Inaba N16961).